Here is an 85-residue protein sequence, read N- to C-terminus: Small ribosomal subunit protein bS20 (85 aa).

Residues 1-24 (MANIKSAIKRAKLSEERRSHNASI) are disordered.

This sequence belongs to the bacterial ribosomal protein bS20 family.

In terms of biological role, binds directly to 16S ribosomal RNA. The polypeptide is Small ribosomal subunit protein bS20 (Bacillus mycoides (strain KBAB4) (Bacillus weihenstephanensis)).